The chain runs to 196 residues: MNEAVSPGALSTLFTDARTHNGWRETPVSDETLREIYALMKWGPTSANCSPTRIVFIRTAEGKERLRPALSSGNLQKTLTAPVTAIVAWDSEFYERLPQLFPHGDARSWFTSSPQLAEETAFRNSSMQAAYLIVACRALGLDTGPMSGFDRQYVDDAFFAGSTLKSNLLINIGYGDSSKLFARLPRLSFEEACGLL.

This sequence belongs to the nitroreductase family. HadB/RutE subfamily. Requires FMN as cofactor.

It carries out the reaction 3-hydroxypropanoate + NADP(+) = 3-oxopropanoate + NADPH + H(+). May reduce toxic product malonic semialdehyde to 3-hydroxypropionic acid, which is excreted. The chain is Probable malonic semialdehyde reductase RutE from Escherichia coli O6:H1 (strain CFT073 / ATCC 700928 / UPEC).